A 214-amino-acid polypeptide reads, in one-letter code: Rho-related GTP-binding protein RhoJ (214 aa).

S-palmitoyl cysteine attachment occurs at residues Cys3 and Cys11. Residues 31 to 36, 46 to 53, 75 to 79, 133 to 136, and 177 to 178 contribute to the GTP site; these read AVGKTC, FPEEYVPT, DTAGQ, TQID, and AL. The Effector region motif lies at 50 to 58; sequence YVPTVFDHY. Cys211 carries the cysteine methyl ester modification. Residue Cys211 is the site of S-farnesyl cysteine attachment. Positions 212-214 are cleaved as a propeptide — removed in mature form; it reads AII.

The protein belongs to the small GTPase superfamily. Rho family. In terms of assembly, interacts with the CRIB domains of proteins such as Pak1 and Was/Wasp. Interacts with GLUL. Palmitoylated; regulates localization to the plasma membrane and may be mediated by GLUL. Highly expressed in heart with moderate levels in lung and liver. Very low levels detected in brain, spleen, skeletal muscle, kidney and testis.

It localises to the cell membrane. Its function is as follows. Plasma membrane-associated small GTPase specifically involved in angiogenesis. Required for endothelial cell migration during vascular development via its interaction with GLUL. Elicits the formation of F-actin-rich structures, thereby regulating endothelial cell migration. This chain is Rho-related GTP-binding protein RhoJ (Rhoj), found in Mus musculus (Mouse).